Here is a 396-residue protein sequence, read N- to C-terminus: Endo-1,4-beta-xylanase A (396 aa).

The N-terminal stretch at 1-28 (MITLFRKPFVAGLAISLLVGGGIGNVAA) is a signal peptide. The GH10 domain maps to 51–396 (AWQVASLSER…VKPAYWRIID (346 aa)). Glutamate 195 functions as the Proton donor in the catalytic mechanism. Glutamate 301 serves as the catalytic Nucleophile.

This sequence belongs to the glycosyl hydrolase 10 (cellulase F) family.

Its subcellular location is the secreted. The catalysed reaction is Endohydrolysis of (1-&gt;4)-beta-D-xylosidic linkages in xylans.. Its pathway is glycan degradation; xylan degradation. The protein is Endo-1,4-beta-xylanase A (xynA) of Halalkalibacterium halodurans (strain ATCC BAA-125 / DSM 18197 / FERM 7344 / JCM 9153 / C-125) (Bacillus halodurans).